The sequence spans 1135 residues: Receptor-type guanylate cyclase gcy-4 (1135 aa).

The N-terminal stretch at 1–20 (MTQLLRFLLILSIFCDFSHS) is a signal peptide. Topologically, residues 21 to 483 (QRPTIRVGIA…CPIPFFDQYR (463 aa)) are extracellular. Residues Asn-37, Asn-193, Asn-209, Asn-251, Asn-349, Asn-375, Asn-431, Asn-436, and Asn-447 are each glycosylated (N-linked (GlcNAc...) asparagine). The helical transmembrane segment at 484–504 (LLIFVFVIVAGLLILAIFTCL) threads the bilayer. At 505–1135 (TSMVRNQRAE…VMRREMMRVS (631 aa)) the chain is on the cytoplasmic side. A disordered region spans residues 535–560 (KGRRLSTDSENSTVTKSSKGSSSKNF). The region spanning 545–837 (NSTVTKSSKG…KDNLMDHVFS (293 aa)) is the Protein kinase domain. A compositionally biased stretch (low complexity) spans 546–560 (STVTKSSKGSSSKNF). Positions 895–1025 (TVFFSDLVKF…DTVNTASRME (131 aa)) constitute a Guanylate cyclase domain.

This sequence belongs to the adenylyl cyclase class-4/guanylyl cyclase family. Expressed bilaterally in ASE neurons.

Its subcellular location is the cell membrane. The catalysed reaction is GTP = 3',5'-cyclic GMP + diphosphate. In terms of biological role, guanylate cyclase involved in the production of the second messenger cGMP. Regulates chemotaxis responses toward salt ions in ASE sensory neurons. This is Receptor-type guanylate cyclase gcy-4 from Caenorhabditis briggsae.